The sequence spans 85 residues: Defensin-like protein 76 (85 aa).

Positions 1-27 (MQNQKHSHILTAITIVLLFAMAAKINA) are cleaved as a signal peptide. Cystine bridges form between Cys-35-Cys-70, Cys-40-Cys-59, Cys-44-Cys-68, and Cys-48-Cys-69.

The protein belongs to the DEFL family.

The protein resides in the secreted. This Arabidopsis thaliana (Mouse-ear cress) protein is Defensin-like protein 76 (LCR86).